Reading from the N-terminus, the 82-residue chain is Small ribosomal subunit protein bS16 (82 aa).

Belongs to the bacterial ribosomal protein bS16 family.

The chain is Small ribosomal subunit protein bS16 from Synechocystis sp. (strain ATCC 27184 / PCC 6803 / Kazusa).